Here is a 90-residue protein sequence, read N- to C-terminus: N(2)-fixation sustaining protein CowN (90 aa).

It belongs to the CowN family.

Is required to sustain N(2)-dependent growth in the presence of low levels of carbon monoxide (CO). Probably acts by protecting the N(2) fixation ability of the nitrogenase complex, which is inactivated in the presence of CO. The sequence is that of N(2)-fixation sustaining protein CowN from Methylocella silvestris (strain DSM 15510 / CIP 108128 / LMG 27833 / NCIMB 13906 / BL2).